The following is a 418-amino-acid chain: Elongation factor 1-gamma 1 (418 aa).

Positions 1–82 (MALVLHTFDG…YVTRSKSDNP (82 aa)) constitute a GST N-terminal domain. In terms of domain architecture, GST C-terminal spans 87–213 (SLIEYAHIEQ…GDVKQADSVP (127 aa)). The tract at residues 211 to 265 (SVPQVQKKAAAPKEQKPKEAKKEAPKEAPKPKAAEKPEEEEEAPKPKPKNPLDLL) is disordered. The span at 221-246 (APKEQKPKEAKKEAPKEAPKPKAAEK) shows a compositional bias: basic and acidic residues. Positions 258–418 (PKNPLDLLPP…EALLDAKCFK (161 aa)) constitute an EF-1-gamma C-terminal domain.

In terms of assembly, EF-1 is composed of four subunits: alpha, beta, delta, and gamma.

Its function is as follows. Probably plays a role in anchoring the complex to other cellular components. The protein is Elongation factor 1-gamma 1 of Oryza sativa subsp. japonica (Rice).